We begin with the raw amino-acid sequence, 423 residues long: SH2 domain-containing protein 5 (423 aa).

The PID domain occupies 28-146 (AQYVGSFPVD…LLCRSFQLAY (119 aa)). The region spanning 296 to 392 (WAFAGISRPC…LDMGRLNPTY (97 aa)) is the SH2 domain. The segment at 392–423 (YEEQDCGPPGRPPRTLRPLSHAKSEAELQGLG) is disordered.

Interacts with BCR.

The protein resides in the postsynaptic density. Its function is as follows. May be involved in synaptic plasticity regulation through the control of Rac-GTP levels. In Homo sapiens (Human), this protein is SH2 domain-containing protein 5.